The sequence spans 428 residues: Elongation factor 1-alpha (428 aa).

The tr-type G domain occupies 5–215 (KPHVNIVFIG…ALDQIPEPPK (211 aa)). The G1 stretch occupies residues 14–21 (GHVDHGKS). Residue 14–21 (GHVDHGKS) participates in GTP binding. Serine 21 provides a ligand contact to Mg(2+). Positions 68–72 (GITID) are G2. Residues 89 to 92 (DAPG) form a G3 region. GTP-binding positions include 89–93 (DAPGH) and 144–147 (NKMD). The segment at 144–147 (NKMD) is G4. The tract at residues 181–183 (SAW) is G5.

This sequence belongs to the TRAFAC class translation factor GTPase superfamily. Classic translation factor GTPase family. EF-Tu/EF-1A subfamily.

The protein resides in the cytoplasm. The catalysed reaction is GTP + H2O = GDP + phosphate + H(+). Its function is as follows. GTP hydrolase that promotes the GTP-dependent binding of aminoacyl-tRNA to the A-site of ribosomes during protein biosynthesis. The polypeptide is Elongation factor 1-alpha (Thermococcus kodakarensis (strain ATCC BAA-918 / JCM 12380 / KOD1) (Pyrococcus kodakaraensis (strain KOD1))).